Consider the following 172-residue polypeptide: Large ribosomal subunit protein bL17 (172 aa).

Residues 123–172 (ATGSKRAQTEEAASQEPAAEAGKQPAEGATSVQTAEAADASQAEGEAEEK) form a disordered region. The span at 132 to 143 (EEAASQEPAAEA) shows a compositional bias: low complexity.

Belongs to the bacterial ribosomal protein bL17 family. Part of the 50S ribosomal subunit. Contacts protein L32.

The chain is Large ribosomal subunit protein bL17 from Thermobifida fusca (strain YX).